Consider the following 192-residue polypeptide: 7-methyl-GTP pyrophosphatase (192 aa).

Asp69 serves as the catalytic Proton acceptor.

It belongs to the Maf family. YceF subfamily. The cofactor is a divalent metal cation.

It is found in the cytoplasm. The catalysed reaction is N(7)-methyl-GTP + H2O = N(7)-methyl-GMP + diphosphate + H(+). Its function is as follows. Nucleoside triphosphate pyrophosphatase that hydrolyzes 7-methyl-GTP (m(7)GTP). May have a dual role in cell division arrest and in preventing the incorporation of modified nucleotides into cellular nucleic acids. This chain is 7-methyl-GTP pyrophosphatase, found in Pseudomonas fluorescens (strain ATCC BAA-477 / NRRL B-23932 / Pf-5).